The sequence spans 270 residues: Tetraspanin-14 (270 aa).

The Cytoplasmic segment spans residues 1-17; the sequence is MHYYRYSNAEVSCWYKY. Residues 18-38 traverse the membrane as a helical segment; it reads LLFSYNIVFWLAGVVFLGVGL. The Extracellular segment spans residues 39–61; that stretch reads WAWSEKGVLSDLTKVTRLHGIDP. A helical membrane pass occupies residues 62 to 82; sequence VVLVLMVGVVMFTLGFAGCVG. At 83–92 the chain is on the cytoplasmic side; sequence ALRENICLLK. A helical membrane pass occupies residues 93–113; the sequence is FFCGAIVLIFFLELAVAVLAF. Residues 114–232 are Extracellular-facing; sequence LFQDWVRDRF…QALEGWLPRN (119 aa). The necessary and sufficient for interaction with ADAM10 stretch occupies residues 114 to 232; the sequence is LFQDWVRDRF…QALEGWLPRN (119 aa). 4 disulfide bridges follow: C153/C221, C154/C186, C170/C180, and C187/C200. N169 carries N-linked (GlcNAc...) asparagine glycosylation. A helical membrane pass occupies residues 233-253; sequence IYIVAGVFIAISLLQIFGIFL. The Cytoplasmic portion of the chain corresponds to 254–270; it reads ARTLISDIEAVKAGHHF.

This sequence belongs to the tetraspanin (TM4SF) family. As to quaternary structure, interacts with ADAM10; the interaction promotes ADAM10 maturation and cell surface expression.

The protein resides in the cell membrane. Its function is as follows. Part of TspanC8 subgroup, composed of 6 members that interact with the transmembrane metalloprotease ADAM10. This interaction is required for ADAM10 exit from the endoplasmic reticulum and for enzymatic maturation and trafficking to the cell surface as well as substrate specificity. Different TspanC8/ADAM10 complexes have distinct substrates. Negatively regulates ADAM10-mediated cleavage of GP6. Promotes ADAM10-mediated cleavage of CDH5. This chain is Tetraspanin-14 (Tspan14), found in Mus musculus (Mouse).